The chain runs to 85 residues: Large ribosomal subunit protein bL27 (85 aa).

A disordered region spans residues M1 to L21.

This sequence belongs to the bacterial ribosomal protein bL27 family.

The chain is Large ribosomal subunit protein bL27 from Geotalea uraniireducens (strain Rf4) (Geobacter uraniireducens).